The chain runs to 232 residues: Large ribosomal subunit protein uL1 (232 aa).

This sequence belongs to the universal ribosomal protein uL1 family. Part of the 50S ribosomal subunit.

Functionally, binds directly to 23S rRNA. The L1 stalk is quite mobile in the ribosome, and is involved in E site tRNA release. Protein L1 is also a translational repressor protein, it controls the translation of the L11 operon by binding to its mRNA. The polypeptide is Large ribosomal subunit protein uL1 (Burkholderia multivorans (strain ATCC 17616 / 249)).